The chain runs to 414 residues: Succinylornithine transaminase (414 aa).

At Lys260 the chain carries N6-(pyridoxal phosphate)lysine.

Belongs to the class-III pyridoxal-phosphate-dependent aminotransferase family. AstC subfamily. Pyridoxal 5'-phosphate serves as cofactor.

The catalysed reaction is N(2)-succinyl-L-ornithine + 2-oxoglutarate = N-succinyl-L-glutamate 5-semialdehyde + L-glutamate. It participates in amino-acid degradation; L-arginine degradation via AST pathway; L-glutamate and succinate from L-arginine: step 3/5. Its function is as follows. Catalyzes the transamination of N(2)-succinylornithine and alpha-ketoglutarate into N(2)-succinylglutamate semialdehyde and glutamate. Can also act as an acetylornithine aminotransferase. This is Succinylornithine transaminase from Yersinia enterocolitica serotype O:8 / biotype 1B (strain NCTC 13174 / 8081).